The sequence spans 205 residues: Meiotic nuclear division protein 1 homolog (205 aa).

Serine 2 carries the N-acetylserine modification. Residues 83–173 adopt a coiled-coil conformation; it reads KRKLEVLDSQ…EAANRWTDNI (91 aa).

The protein belongs to the MND1 family. As to quaternary structure, heterodimer with PSMC3IP/HOP2. MND1-PSMC3IP interacts with DMC1 and RAD51 and binds preferentially to dsDNA.

It localises to the nucleus. In terms of biological role, required for proper homologous chromosome pairing and efficient cross-over and intragenic recombination during meiosis. Stimulates both DMC1- and RAD51-mediated homologous strand assimilation, which is required for the resolution of meiotic double-strand breaks. In Bos taurus (Bovine), this protein is Meiotic nuclear division protein 1 homolog.